Here is a 421-residue protein sequence, read N- to C-terminus: Probable sugar-binding periplasmic protein (421 aa).

Residues 1-27 (MHKLLKLAAMGTAACALLAGMAPVANA) form the signal peptide.

The protein belongs to the bacterial solute-binding protein 1 family.

It is found in the periplasm. Part of a binding-protein-dependent transport system for a sugar. This Brucella suis biovar 1 (strain 1330) protein is Probable sugar-binding periplasmic protein.